Consider the following 157-residue polypeptide: uncharacterized protein (157 aa).

4 consecutive transmembrane segments (helical) span residues 3–23 (IFSF…MFIS), 24–44 (AFLS…ALAV), 47–67 (LMLG…ATAG), and 105–125 (IALL…IAGW).

It to E.coli YqaA.

The protein resides in the cell membrane. This is an uncharacterized protein from Haemophilus influenzae (strain ATCC 51907 / DSM 11121 / KW20 / Rd).